Consider the following 396-residue polypeptide: Na(+)/H(+) antiporter NhaA (396 aa).

11 helical membrane-spanning segments follow: residues 17–37, 59–79, 97–117, 127–147, 156–176, 181–201, 206–226, 260–280, 292–312, 333–353, and 368–388; these read FSGLLLILFCFLAIFISNTNF, FSLTNIVNDILMTFFFLEIGI, ILPGIAAIGGMIFPALIYNFI, GWAITVATDIAFAVGVLKILG, IFLLSLAIFDDIGAILIIAFF, IDQYMILLSTLVILTILSINY, CIYIYIIFGILLWESIFLSGI, SLSFLNKYFILPIFAFFNSGI, LLPFGIFFGLVLGKPIGVFLF, IAGISFLCGIGFTMSIFISNL, and FSILISSIVSSVIGFLFLYFL.

The protein belongs to the NhaA Na(+)/H(+) (TC 2.A.33) antiporter family.

It is found in the cell membrane. The enzyme catalyses Na(+)(in) + 2 H(+)(out) = Na(+)(out) + 2 H(+)(in). Na(+)/H(+) antiporter that extrudes sodium in exchange for external protons. This chain is Na(+)/H(+) antiporter NhaA, found in Wigglesworthia glossinidia brevipalpis.